Reading from the N-terminus, the 258-residue chain is Phycoerythrobilin:ferredoxin oxidoreductase (258 aa).

It belongs to the HY2 family.

It carries out the reaction (3Z)-phycoerythrobilin + oxidized 2[4Fe-4S]-[ferredoxin] = 15,16-dihydrobiliverdin + reduced 2[4Fe-4S]-[ferredoxin] + 2 H(+). In terms of biological role, catalyzes the two-electron reduction of the C2 and C3(1) diene system of 15,16-dihydrobiliverdin. This is Phycoerythrobilin:ferredoxin oxidoreductase from Prochlorococcus marinus (strain NATL1A).